The primary structure comprises 89 residues: CRISPR-associated endoribonuclease Cas2 2 (89 aa).

D9 is a Mg(2+) binding site.

Belongs to the CRISPR-associated endoribonuclease Cas2 protein family. In terms of assembly, homodimer, forms a heterotetramer with a Cas1 homodimer. The cofactor is Mg(2+).

In terms of biological role, CRISPR (clustered regularly interspaced short palindromic repeat), is an adaptive immune system that provides protection against mobile genetic elements (viruses, transposable elements and conjugative plasmids). CRISPR clusters contain sequences complementary to antecedent mobile elements and target invading nucleic acids. CRISPR clusters are transcribed and processed into CRISPR RNA (crRNA). Functions as a ssRNA-specific endoribonuclease. Involved in the integration of spacer DNA into the CRISPR cassette. The polypeptide is CRISPR-associated endoribonuclease Cas2 2 (Methanospirillum hungatei JF-1 (strain ATCC 27890 / DSM 864 / NBRC 100397 / JF-1)).